Here is a 422-residue protein sequence, read N- to C-terminus: UPF0597 protein Kole_0595 (422 aa).

The protein belongs to the UPF0597 family.

In Kosmotoga olearia (strain ATCC BAA-1733 / DSM 21960 / TBF 19.5.1), this protein is UPF0597 protein Kole_0595.